We begin with the raw amino-acid sequence, 277 residues long: Phosphatidylserine decarboxylase proenzyme (277 aa).

Active-site charge relay system; for autoendoproteolytic cleavage activity residues include Asp-88, His-144, and Ser-242. Ser-242 serves as the catalytic Schiff-base intermediate with substrate; via pyruvic acid; for decarboxylase activity. Ser-242 is modified (pyruvic acid (Ser); by autocatalysis).

This sequence belongs to the phosphatidylserine decarboxylase family. PSD-B subfamily. Prokaryotic type I sub-subfamily. Heterodimer of a large membrane-associated beta subunit and a small pyruvoyl-containing alpha subunit. Requires pyruvate as cofactor. Post-translationally, is synthesized initially as an inactive proenzyme. Formation of the active enzyme involves a self-maturation process in which the active site pyruvoyl group is generated from an internal serine residue via an autocatalytic post-translational modification. Two non-identical subunits are generated from the proenzyme in this reaction, and the pyruvate is formed at the N-terminus of the alpha chain, which is derived from the carboxyl end of the proenzyme. The autoendoproteolytic cleavage occurs by a canonical serine protease mechanism, in which the side chain hydroxyl group of the serine supplies its oxygen atom to form the C-terminus of the beta chain, while the remainder of the serine residue undergoes an oxidative deamination to produce ammonia and the pyruvoyl prosthetic group on the alpha chain. During this reaction, the Ser that is part of the protease active site of the proenzyme becomes the pyruvoyl prosthetic group, which constitutes an essential element of the active site of the mature decarboxylase.

Its subcellular location is the cell membrane. It catalyses the reaction a 1,2-diacyl-sn-glycero-3-phospho-L-serine + H(+) = a 1,2-diacyl-sn-glycero-3-phosphoethanolamine + CO2. Its pathway is phospholipid metabolism; phosphatidylethanolamine biosynthesis; phosphatidylethanolamine from CDP-diacylglycerol: step 2/2. In terms of biological role, catalyzes the formation of phosphatidylethanolamine (PtdEtn) from phosphatidylserine (PtdSer). In Psychrobacter arcticus (strain DSM 17307 / VKM B-2377 / 273-4), this protein is Phosphatidylserine decarboxylase proenzyme.